We begin with the raw amino-acid sequence, 188 residues long: Marginal zone B- and B1-cell-specific protein (188 aa).

An N-terminal signal peptide occupies residues 1-20 (MRLPLPLLLLFGCRAILGSA). Intrachain disulfides connect Cys-49/Cys-177, Cys-52/Cys-170, and Cys-94/Cys-142. The Prevents secretion from ER signature appears at 185–188 (REEL).

This sequence belongs to the MZB1 family. As to quaternary structure, part of the ER chaperone complex, a multi-protein complex in the endoplasmic reticulum containing a large number of molecular chaperones which associates with unassembled incompletely folded immunoglobulin heavy chains. Interacts with HSP90B1 and PDIA3 in a calcium-dependent manner. Forms an interchain disulfide bond with IgM monomers. Expressed predominantly in the spleen and lymph nodes. Abundantly expressed in marginal zone B and B1 cells. High expression in mesenteric adipose tissue (MAT). Expressed also in pancreas, perigonadal adipose tissue (PAT), uterus, subcutaneous adipose tissue, heart, muscle, ovary and liver. Very low expression is detected in brown adipose tissue. In PAT, significantly higher expression in stromal-vascular cell than in adipocytes. Expressed in macrophage RAW 264.7 cell line. Down-regulated in For-knockout female MAT at 5 months (obese state) followed by steep up-regulation at 9 months (prediabetic condition) when mutants progress towards the metabolic syndrome.

The protein localises to the endoplasmic reticulum. It localises to the endoplasmic reticulum lumen. Its subcellular location is the secreted. Its function is as follows. Associates with immunoglobulin M (IgM) heavy and light chains and promotes IgM assembly and secretion. May exert its effect by acting as a molecular chaperone or as an oxidoreductase as it displays a low level of oxidoreductase activity. Helps to diversify peripheral B-cell functions by regulating Ca(2+) stores, antibody secretion and integrin activation. Acts as a hormone-regulated adipokine/pro-inflammatory cytokine that is implicated in causing chronic inflammation, affecting cellular expansion and blunting insulin response in adipocytes. May have a role in the onset of insulin resistance. This is Marginal zone B- and B1-cell-specific protein (Mzb1) from Mus musculus (Mouse).